Reading from the N-terminus, the 270-residue chain is UPF0162 protein VC_2176 (270 aa).

This sequence belongs to the UPF0162 family.

In Vibrio cholerae serotype O1 (strain ATCC 39315 / El Tor Inaba N16961), this protein is UPF0162 protein VC_2176.